The following is a 176-amino-acid chain: Ribosome rescue factor SmrB (176 aa).

In terms of domain architecture, Smr spans 98-173 (LDLHGLNQYQ…NDAAIMVIIE (76 aa)).

Belongs to the SmrB family. Associates with collided ribosomes, but not with correctly translating polysomes.

Its function is as follows. Acts as a ribosome collision sensor. Detects stalled/collided disomes (pairs of ribosomes where the leading ribosome is stalled and a second ribosome has collided with it) and endonucleolytically cleaves mRNA at the 5' boundary of the stalled ribosome. Stalled/collided disomes form a new interface (primarily via the 30S subunits) that binds SmrB. Cleaved mRNA becomes available for tmRNA ligation, leading to ribosomal subunit dissociation and rescue of stalled ribosomes. The chain is Ribosome rescue factor SmrB from Buchnera aphidicola subsp. Schizaphis graminum (strain Sg).